A 489-amino-acid polypeptide reads, in one-letter code: MKYHDLRDFLTLLEQQGELKRITLPVDPHLEITEIADRTLRAGGPALLFENPKGYSMPVLCNLFGTPKRVAMGMGQDDVSALRDVGKLLAFLKEPEPPKGFRDLFDKLPQFKQVLNMPTKRLRGAPCQQKIASGDDVDLTRLPIMTCWPDDAAPLITWGLTVTRGPHKERQNLGIYRQQLIDKNKLIMRWLSHRGGALDFQEWLAAHPGERFPISVALGADPATILGAVTPVPDTLSEYAFAGLLRGTKTEVVKCLSNDLEVPASAEIILEGYIEPGEMAPEGPYGDHTGYYNEVDNFPVFTVTHITQREDAIYHSTYTGRPPDEPAVLGVALNEVFVPILQKQFPEIVDFYLPPEGCSYRLAVVTMKKQYAGHAKRVMMGVWSFLRQFMYTKFVIVCDDDVNARDWNDVIWAITTRMDPARDTVLVDNTPIDYLDFASPVSGLGSKMGLDATNKWPGETQREWGRPIVKDPEVTARIDAIWDELAIFK.

Asn-172 is a Mn(2+) binding site. Prenylated FMN is bound by residues 175–177, 189–191, and 194–195; these read IYR, RWL, and RG. Glu-238 lines the Mn(2+) pocket. The active-site Proton donor is Asp-287.

The protein belongs to the UbiD family. Homohexamer. Prenylated FMN serves as cofactor. Requires Mn(2+) as cofactor.

The protein localises to the cell membrane. It catalyses the reaction a 4-hydroxy-3-(all-trans-polyprenyl)benzoate + H(+) = a 2-(all-trans-polyprenyl)phenol + CO2. It participates in cofactor biosynthesis; ubiquinone biosynthesis. Functionally, catalyzes the decarboxylation of 3-octaprenyl-4-hydroxy benzoate to 2-octaprenylphenol, an intermediate step in ubiquinone biosynthesis. The sequence is that of 3-octaprenyl-4-hydroxybenzoate carboxy-lyase from Salmonella arizonae (strain ATCC BAA-731 / CDC346-86 / RSK2980).